A 347-amino-acid polypeptide reads, in one-letter code: NADH-ubiquinone oxidoreductase chain 2 (347 aa).

11 helical membrane passes run 1-21 (MNPLAQPIIYSTIFAGTLITA), 25-45 (HWFLAWVGLEMNMLAFIPVLT), 55-75 (AAIKYFLVQATASMILMMAIL), 96-116 (LMILTALAMKLGMAPFHFWVP), 123-143 (TLTSGLLLLTWQKLAPISIMY), 145-165 (IFPVMNVNILLTFSILSIMVG), 178-198 (ILAYSSITHVGWMTAVLPYNP), 199-219 (NITIFNLTIYIVLTTTAFLAL), 237-257 (LTWLLPLIPSTLLSLGGLPPL), 274-294 (GTLIIPTIMAIVTLINLYFYM), and 324-344 (LLLPTLTILTTLLLPIAPLTF).

Belongs to the complex I subunit 2 family. As to quaternary structure, core subunit of respiratory chain NADH dehydrogenase (Complex I) which is composed of 45 different subunits. Interacts with TMEM242.

It localises to the mitochondrion inner membrane. It carries out the reaction a ubiquinone + NADH + 5 H(+)(in) = a ubiquinol + NAD(+) + 4 H(+)(out). Its function is as follows. Core subunit of the mitochondrial membrane respiratory chain NADH dehydrogenase (Complex I) which catalyzes electron transfer from NADH through the respiratory chain, using ubiquinone as an electron acceptor. Essential for the catalytic activity and assembly of complex I. The polypeptide is NADH-ubiquinone oxidoreductase chain 2 (Symphalangus syndactylus (Siamang)).